Consider the following 402-residue polypeptide: Arginine biosynthesis bifunctional protein ArgJ (402 aa).

Thr152, Lys178, Thr189, Glu275, Asn397, and Thr402 together coordinate substrate. Thr189 functions as the Nucleophile in the catalytic mechanism.

Belongs to the ArgJ family. Heterotetramer of two alpha and two beta chains.

It localises to the cytoplasm. The catalysed reaction is N(2)-acetyl-L-ornithine + L-glutamate = N-acetyl-L-glutamate + L-ornithine. It carries out the reaction L-glutamate + acetyl-CoA = N-acetyl-L-glutamate + CoA + H(+). Its pathway is amino-acid biosynthesis; L-arginine biosynthesis; L-ornithine and N-acetyl-L-glutamate from L-glutamate and N(2)-acetyl-L-ornithine (cyclic): step 1/1. The protein operates within amino-acid biosynthesis; L-arginine biosynthesis; N(2)-acetyl-L-ornithine from L-glutamate: step 1/4. Its function is as follows. Catalyzes two activities which are involved in the cyclic version of arginine biosynthesis: the synthesis of N-acetylglutamate from glutamate and acetyl-CoA as the acetyl donor, and of ornithine by transacetylation between N(2)-acetylornithine and glutamate. The chain is Arginine biosynthesis bifunctional protein ArgJ from Symbiobacterium thermophilum (strain DSM 24528 / JCM 14929 / IAM 14863 / T).